A 128-amino-acid chain; its full sequence is MEQWTTEIWFSISIAFLIGTLCGVLVMRFFKGNIQQQIQLKSELASAEAKIEEQKQQLERHFEQSANLLENLAEDYKKLYTHFAQNSEQLLPESNQVEFFKRLKNHANGDEDNQPRDYSDGSSGLLKS.

The chain crosses the membrane as a helical span at residues 7 to 27 (EIWFSISIAFLIGTLCGVLVM). Residues 37–75 (QIQLKSELASAEAKIEEQKQQLERHFEQSANLLENLAED) adopt a coiled-coil conformation. Positions 105-128 (NHANGDEDNQPRDYSDGSSGLLKS) are disordered. Positions 107–119 (ANGDEDNQPRDYS) are enriched in basic and acidic residues.

It belongs to the ZapG family. In terms of assembly, homotetramer. In solution, is primarily monomeric but forms small amounts of stable tetramer and hexadecamer. The crystal structure of the cytosolic region shows a coiled-coil tetramer in the asymmetric unit that is very likely to be a physiologically relevant assembly of the protein.

Its subcellular location is the cell inner membrane. In terms of biological role, involved in cell division, cell envelope biogenesis and cell shape maintenance. This chain is Z-ring associated protein G, found in Haemophilus ducreyi (strain 35000HP / ATCC 700724).